A 571-amino-acid polypeptide reads, in one-letter code: Sulfite reductase [NADPH] hemoprotein beta-component (571 aa).

Residues cysteine 435, cysteine 441, cysteine 480, and cysteine 484 each contribute to the [4Fe-4S] cluster site. Cysteine 484 lines the siroheme pocket.

It belongs to the nitrite and sulfite reductase 4Fe-4S domain family. As to quaternary structure, alpha(8)-beta(8). The alpha component is a flavoprotein, the beta component is a hemoprotein. Requires siroheme as cofactor. [4Fe-4S] cluster serves as cofactor.

The catalysed reaction is hydrogen sulfide + 3 NADP(+) + 3 H2O = sulfite + 3 NADPH + 4 H(+). It functions in the pathway sulfur metabolism; hydrogen sulfide biosynthesis; hydrogen sulfide from sulfite (NADPH route): step 1/1. Functionally, component of the sulfite reductase complex that catalyzes the 6-electron reduction of sulfite to sulfide. This is one of several activities required for the biosynthesis of L-cysteine from sulfate. The protein is Sulfite reductase [NADPH] hemoprotein beta-component of Erwinia tasmaniensis (strain DSM 17950 / CFBP 7177 / CIP 109463 / NCPPB 4357 / Et1/99).